The chain runs to 122 residues: uncharacterized protein (122 aa).

2 consecutive transmembrane segments (helical) span residues 34–54 (IIFL…GVLV) and 91–111 (FVLA…FVSF).

It localises to the cell membrane. This is an uncharacterized protein from Mycoplasma pneumoniae (strain ATCC 29342 / M129 / Subtype 1) (Mycoplasmoides pneumoniae).